The sequence spans 284 residues: Bifunctional protein FolD (284 aa).

Residues 166 to 168 (GAS) and isoleucine 232 each bind NADP(+).

It belongs to the tetrahydrofolate dehydrogenase/cyclohydrolase family. Homodimer.

It catalyses the reaction (6R)-5,10-methylene-5,6,7,8-tetrahydrofolate + NADP(+) = (6R)-5,10-methenyltetrahydrofolate + NADPH. It carries out the reaction (6R)-5,10-methenyltetrahydrofolate + H2O = (6R)-10-formyltetrahydrofolate + H(+). The protein operates within one-carbon metabolism; tetrahydrofolate interconversion. Catalyzes the oxidation of 5,10-methylenetetrahydrofolate to 5,10-methenyltetrahydrofolate and then the hydrolysis of 5,10-methenyltetrahydrofolate to 10-formyltetrahydrofolate. The chain is Bifunctional protein FolD from Shewanella sp. (strain ANA-3).